The following is a 796-amino-acid chain: Armadillo repeat-containing protein wrm-1 (796 aa).

Residues 17–59 are disordered; sequence NFNPMTPSTSRVSTPVRPSSTMSARQYSGSPFKAQPQNMEPSN. An ARM repeat occupies 462–504; the sequence is ESIHCIVQLIGCSDVTIVELATGTLRNIGLHNKMNKAFMVQDG.

Interacts (independently of ARM repeat) with nhr-25. Component of the beta-catenin-lit-1 complex (also called the lit-1/wrm-1 complex or the wrm-1/lit-1 kinase complex) at least composed of lit-1 and wrm-1. Interacts (via N-terminus) with lit-1; the interaction is direct and activates lit-1 kinase activity which leads to the phosphorylation of pop-1. This promotes pop-1 interaction with par-5 and translocation of pop-1 from the nucleus to the cytoplasm.

It localises to the cytoplasm. Its subcellular location is the cell cortex. It is found in the nucleus. Its function is as follows. Antagonistic role in the Wnt signaling pathway that operates in embryogenesis. When located at the cortex it has been shown to inhibit Wnt signaling during asymmetric cell division but when relocated to the nucleus it shows positive regulation. Has a role in blastomere signaling during endoderm specification. Component of the beta-catenin-lit-1 complex which promotes phosphorylation, down-regulation and subcellular relocation of pop-1. Within the complex, activates lit-1-dependent kinase activity. Can substitute for bar-1 indicating functional redundancy. Appears to have a role in centrosome positioning and can activation transcription in yeast. Involved in the development of distal tip cells (DTC) by regulating the asymmetric distribution of cye-1 and cki-1 between the daughters of Z1.a and Z4.p cells. The sequence is that of Armadillo repeat-containing protein wrm-1 from Caenorhabditis elegans.